Here is a 325-residue protein sequence, read N- to C-terminus: NADH-quinone oxidoreductase subunit H (325 aa).

Helical transmembrane passes span 11–31, 50–69, 81–101, 114–134, 154–174, 186–206, 237–257, 265–285, and 304–324; these read ILLS…CGAF, NRVG…KMFF, VIFT…FAIV, IGIL…LFAG, VSYE…AGSF, LWNV…GVAV, FFVG…TLFF, LPPF…FILI, and VCLP…LWQA.

Belongs to the complex I subunit 1 family. NDH-1 is composed of 13 different subunits. Subunits NuoA, H, J, K, L, M, N constitute the membrane sector of the complex.

It is found in the cell inner membrane. The enzyme catalyses a quinone + NADH + 5 H(+)(in) = a quinol + NAD(+) + 4 H(+)(out). Its function is as follows. NDH-1 shuttles electrons from NADH, via FMN and iron-sulfur (Fe-S) centers, to quinones in the respiratory chain. The immediate electron acceptor for the enzyme in this species is believed to be ubiquinone. Couples the redox reaction to proton translocation (for every two electrons transferred, four hydrogen ions are translocated across the cytoplasmic membrane), and thus conserves the redox energy in a proton gradient. This subunit may bind ubiquinone. The sequence is that of NADH-quinone oxidoreductase subunit H from Salmonella agona (strain SL483).